The following is a 781-amino-acid chain: Protein argonaute (781 aa).

The 85-residue stretch at 110 to 194 (SMNELLTERR…RHNDYCNSVM (85 aa)) folds into the PAZ domain. A Piwi domain is found at 436–760 (LVVIVIPGPK…LSKFCGEVLR (325 aa)).

This sequence belongs to the argonaute family. Ago subfamily. Interacts with miR2. Highly specific binding to the mRNA m7G-cap. May be a component of the RNA-induced silencing complex (RISC), a sequence-specific, multicomponent nuclease that destroys or silences messenger RNAs homologous to the silencing trigger.

The protein localises to the cytoplasm. Functionally, plays an essential role in growth and, with Dicer, also involved in microRNA (miRNA)-mediated translational repression. The RNA interference pathway is implicated in antigenic variation having a role in regulation of variant-specific surface protein (VSP)-coding gene expression. Several VSP genes are transcribed but only transcripts encoding the VSP to be expressed accumulate. Antisense RNAs corresponding to the silenced VSP genes are detected. The polypeptide is Protein argonaute (Giardia intestinalis (Giardia lamblia)).